The primary structure comprises 356 residues: uncharacterized protein (356 aa).

Residues 1 to 21 form the signal peptide; it reads MHWSRFVGIFLVFSVFSLVNC. The disordered stretch occupies residues 293-317; the sequence is RPETDYEGANLPNIPSKKGSANQPV.

This is an uncharacterized protein from Acanthamoeba polyphaga mimivirus (APMV).